The primary structure comprises 155 residues: Small ribosomal subunit protein bS16 (155 aa).

Positions 100-155 are disordered; sequence EAGIPDPAPSTEEPAAVCEASAEMAGQPGEVEPAGAAAEPNSQEPEPEEEKPQVEA. Over residues 124-143 the composition is skewed to low complexity; the sequence is AGQPGEVEPAGAAAEPNSQE.

It belongs to the bacterial ribosomal protein bS16 family.

This Synechococcus sp. (strain JA-3-3Ab) (Cyanobacteria bacterium Yellowstone A-Prime) protein is Small ribosomal subunit protein bS16.